Here is a 626-residue protein sequence, read N- to C-terminus: Pheromone B alpha 3 receptor (626 aa).

Helical transmembrane passes span 8–28, 36–56, 70–90, 113–133, 163–183, 208–228, and 271–291; these read LFPT…PWHL, CFFM…SIVW, ISIR…LCII, IIID…MQYI, IWPV…LIEF, LMAL…FVIV, and ELTR…FGFA. Disordered stretches follow at residues 363–409, 481–509, 524–549, and 571–626; these read KQYT…SSPI, ATFT…SSSA, STTD…RLPS, and QDVA…RASV. Over residues 376–391 the composition is skewed to low complexity; sequence SSSGFSSSESTRFGSS. A compositionally biased stretch (low complexity) spans 574 to 606; it reads ATGTAAPTTTAPAPASTTIAPATTTATAPTTTA.

The protein belongs to the G-protein coupled receptor 4 family.

The protein localises to the membrane. Receptor for the BAP3 pheromone, a prenylated mating factor. This Schizophyllum commune (strain H4-8 / FGSC 9210) (Split gill fungus) protein is Pheromone B alpha 3 receptor (BAR3).